We begin with the raw amino-acid sequence, 207 residues long: 2,3-bisphosphoglycerate-dependent phosphoglycerate mutase (207 aa).

Residues R10–N17, T23–G24, R62, E89–Y92, K100, R116–R117, and G160–N161 each bind substrate. The active-site Tele-phosphohistidine intermediate is the H11. E89 (proton donor/acceptor) is an active-site residue.

It belongs to the phosphoglycerate mutase family. BPG-dependent PGAM subfamily. As to quaternary structure, homodimer.

It carries out the reaction (2R)-2-phosphoglycerate = (2R)-3-phosphoglycerate. It participates in carbohydrate degradation; glycolysis; pyruvate from D-glyceraldehyde 3-phosphate: step 3/5. In terms of biological role, catalyzes the interconversion of 2-phosphoglycerate and 3-phosphoglycerate. The polypeptide is 2,3-bisphosphoglycerate-dependent phosphoglycerate mutase (Nitrobacter hamburgensis (strain DSM 10229 / NCIMB 13809 / X14)).